The chain runs to 380 residues: MPIDPVALTADLVRCPSVTPEEGGALDLIERILSGAGFDCTRVDRNGVPNLFARWGRKGANRTFGFNGHTDVVPVGDAAAWTRDPFGGEIADGWLWGRGATDMKSGVAAFVAAAVDFVQETPPDGAVVLTITGDEEGDAADGTVALLDWMAAEGEAMSVCLVGEPTCPERLGEMMKIGRRGSMTAFFTARGVQGHSAYPHRAKNPVAALARLIDRLSSHDLDRGTEHFDASTLAVTTFDTGNPATNVIPALCRATVNIRFNDAHSGASLTRWLEEEAARVTAETGVEIALSAKISGESFLTPPGELSELVARAVEAETGLRPEPSTSGGTSDARFVRAHCPVVEFGLVGKTMHQVDERVEVGQIEPLKAIYLRILKDYFA.

His69 lines the Zn(2+) pocket. The active site involves Asp71. Zn(2+) is bound at residue Asp102. Glu135 functions as the Proton acceptor in the catalytic mechanism. Residues Glu136, Glu164, and His353 each coordinate Zn(2+).

The protein belongs to the peptidase M20A family. DapE subfamily. As to quaternary structure, homodimer. Zn(2+) serves as cofactor. It depends on Co(2+) as a cofactor.

The enzyme catalyses N-succinyl-(2S,6S)-2,6-diaminopimelate + H2O = (2S,6S)-2,6-diaminopimelate + succinate. It functions in the pathway amino-acid biosynthesis; L-lysine biosynthesis via DAP pathway; LL-2,6-diaminopimelate from (S)-tetrahydrodipicolinate (succinylase route): step 3/3. Its function is as follows. Catalyzes the hydrolysis of N-succinyl-L,L-diaminopimelic acid (SDAP), forming succinate and LL-2,6-diaminopimelate (DAP), an intermediate involved in the bacterial biosynthesis of lysine and meso-diaminopimelic acid, an essential component of bacterial cell walls. In Cereibacter sphaeroides (strain KD131 / KCTC 12085) (Rhodobacter sphaeroides), this protein is Succinyl-diaminopimelate desuccinylase.